Here is a 257-residue protein sequence, read N- to C-terminus: uncharacterized protein (257 aa).

This is an uncharacterized protein from Acidianus bottle-shaped virus (isolate Italy/Pozzuoli) (ABV).